We begin with the raw amino-acid sequence, 364 residues long: Cobalt-precorrin-5B C(1)-methyltransferase (364 aa).

It belongs to the CbiD family.

The catalysed reaction is Co-precorrin-5B + S-adenosyl-L-methionine = Co-precorrin-6A + S-adenosyl-L-homocysteine. It participates in cofactor biosynthesis; adenosylcobalamin biosynthesis; cob(II)yrinate a,c-diamide from sirohydrochlorin (anaerobic route): step 6/10. Catalyzes the methylation of C-1 in cobalt-precorrin-5B to form cobalt-precorrin-6A. This is Cobalt-precorrin-5B C(1)-methyltransferase from Pseudomonas putida (strain W619).